The following is a 349-amino-acid chain: Isopentenyl-diphosphate delta-isomerase (349 aa).

Residue 6 to 7 (RK) participates in substrate binding. FMN contacts are provided by residues 62–64 (AMT), Ser93, and Asn122. Residue Gln152 participates in substrate binding. Residue Glu153 coordinates Mg(2+). FMN-binding positions include Lys184, Thr214, 258–259 (GG), and 280–281 (AG).

Belongs to the IPP isomerase type 2 family. As to quaternary structure, homooctamer. Dimer of tetramers. It depends on FMN as a cofactor. NADPH is required as a cofactor. Requires Mg(2+) as cofactor.

It is found in the cytoplasm. The enzyme catalyses isopentenyl diphosphate = dimethylallyl diphosphate. In terms of biological role, involved in the biosynthesis of isoprenoids. Catalyzes the 1,3-allylic rearrangement of the homoallylic substrate isopentenyl (IPP) to its allylic isomer, dimethylallyl diphosphate (DMAPP). This is Isopentenyl-diphosphate delta-isomerase from Bacillus thuringiensis subsp. konkukian (strain 97-27).